Here is a 281-residue protein sequence, read N- to C-terminus: Probable endonuclease 4 (281 aa).

Residues H69, H109, E145, D179, H182, H216, D229, H231, and E261 each coordinate Zn(2+).

The protein belongs to the AP endonuclease 2 family. The cofactor is Zn(2+).

It catalyses the reaction Endonucleolytic cleavage to 5'-phosphooligonucleotide end-products.. In terms of biological role, endonuclease IV plays a role in DNA repair. It cleaves phosphodiester bonds at apurinic or apyrimidinic (AP) sites, generating a 3'-hydroxyl group and a 5'-terminal sugar phosphate. This chain is Probable endonuclease 4, found in Buchnera aphidicola subsp. Acyrthosiphon pisum (strain APS) (Acyrthosiphon pisum symbiotic bacterium).